Here is a 331-residue protein sequence, read N- to C-terminus: 6-phosphogluconolactonase (331 aa).

Belongs to the cycloisomerase 2 family.

The catalysed reaction is 6-phospho-D-glucono-1,5-lactone + H2O = 6-phospho-D-gluconate + H(+). It functions in the pathway carbohydrate degradation; pentose phosphate pathway; D-ribulose 5-phosphate from D-glucose 6-phosphate (oxidative stage): step 2/3. Functionally, catalyzes the hydrolysis of 6-phosphogluconolactone to 6-phosphogluconate. This chain is 6-phosphogluconolactonase, found in Buchnera aphidicola subsp. Baizongia pistaciae (strain Bp).